Reading from the N-terminus, the 213-residue chain is FQYVSTTTKVPPPDMTSFPYGTRRSPAKIWPTTKRPAITPANNPKHSKDPHKTGPEDTTVLIETKRDYSTELSVTIAVGASLLFLNILAFAALYYKKDKRRHETHRRPSPQRNTTNDIAHIQNEEIMSLQMKQLEHDHECESLQAHDTLRLTCPPDYTLTLRRSPDDIPLMTPNTITMIPNTLTGMQPLHTFNTFSGGQNSTNLPHGHSTTRV.

Residues 1-56 are disordered; that stretch reads FQYVSTTTKVPPPDMTSFPYGTRRSPAKIWPTTKRPAITPANNPKHSKDPHKTGPE. Residues 1-73 are Extracellular-facing; it reads FQYVSTTTKV…TKRDYSTELS (73 aa). The segment covering 46–55 has biased composition (basic and acidic residues); sequence HSKDPHKTGP. The chain crosses the membrane as a helical span at residues 74 to 94; the sequence is VTIAVGASLLFLNILAFAALY. The Cytoplasmic segment spans residues 95 to 213; that stretch reads YKKDKRRHET…LPHGHSTTRV (119 aa). Ser109 is modified (phosphoserine).

This sequence belongs to the type-B carboxylesterase/lipase family. As to quaternary structure, homodimer. Interacts with NRXN1 in a calcium-dependent manner. Interaction with neurexins is mediated by heparan sulfate glycan modification on neurexin. Interacts through its C-terminus with DLG4/PSD-95 third PDZ domain.

It is found in the cell membrane. It localises to the postsynaptic density membrane. In terms of biological role, cell surface protein involved in cell-cell-interactions via its interactions with neurexin family members. In Macaca mulatta (Rhesus macaque), this protein is Neuroligin-4, X-linked (NLGN4X).